Consider the following 67-residue polypeptide: Large ribosomal subunit protein bL31 (67 aa).

Residues cysteine 16, cysteine 18, cysteine 36, and cysteine 39 each coordinate Zn(2+).

Belongs to the bacterial ribosomal protein bL31 family. Type A subfamily. In terms of assembly, part of the 50S ribosomal subunit. Zn(2+) is required as a cofactor.

Functionally, binds the 23S rRNA. In Treponema pallidum (strain Nichols), this protein is Large ribosomal subunit protein bL31.